The following is a 137-amino-acid chain: Basic phospholipase A2 2 (137 aa).

An N-terminal signal peptide occupies residues 1–11; that stretch reads LVAVCVSLLGA. Residues 12 to 19 constitute a propeptide that is removed on maturation; the sequence is ANIPPQPL. 7 cysteine pairs are disulfide-bonded: Cys30–Cys89, Cys44–Cys136, Cys46–Cys62, Cys61–Cys117, Cys68–Cys110, Cys78–Cys103, and Cys96–Cys108. Tyr45 and Gly47 together coordinate Ca(2+). Tyr48 contributes to the alpha-D-mannopyranose binding site. Gly49 contributes to the Ca(2+) binding site. His65 is a catalytic residue. Asp66 is a binding site for Ca(2+). Alpha-D-mannopyranose is bound at residue Asp66. Asp111 is an active-site residue.

Belongs to the phospholipase A2 family. Group I subfamily. D49 sub-subfamily. As to quaternary structure, homodimer; non-covalently linked. Ca(2+) is required as a cofactor. In terms of processing, homodimerization and interaction of the catalytically important Asp-49 (here Asp-111) with mannose molecules may render this protein inactive. As to expression, expressed by the venom gland.

Its subcellular location is the secreted. It catalyses the reaction a 1,2-diacyl-sn-glycero-3-phosphocholine + H2O = a 1-acyl-sn-glycero-3-phosphocholine + a fatty acid + H(+). Functionally, snake venom phospholipase A2 (PLA2) that shows anticoagulant and neurotoxic activities. PLA2 catalyzes the calcium-dependent hydrolysis of the 2-acyl groups in 3-sn-phosphoglycerides. The sequence is that of Basic phospholipase A2 2 from Bungarus caeruleus (Indian krait).